The sequence spans 251 residues: Phosphate import ATP-binding protein PstB (251 aa).

Residues 5 to 246 (FDIRNFSVYY…PEKELTEKYL (242 aa)) enclose the ABC transporter domain. Residue 37-44 (GPSGCGKS) coordinates ATP.

It belongs to the ABC transporter superfamily. Phosphate importer (TC 3.A.1.7) family. The complex is composed of two ATP-binding proteins (PstB), two transmembrane proteins (PstC and PstA) and a solute-binding protein (PstS).

It is found in the cell membrane. It carries out the reaction phosphate(out) + ATP + H2O = ADP + 2 phosphate(in) + H(+). Part of the ABC transporter complex PstSACB involved in phosphate import. Responsible for energy coupling to the transport system. The sequence is that of Phosphate import ATP-binding protein PstB from Archaeoglobus fulgidus (strain ATCC 49558 / DSM 4304 / JCM 9628 / NBRC 100126 / VC-16).